A 677-amino-acid polypeptide reads, in one-letter code: DNA ligase (677 aa).

NAD(+) contacts are provided by residues Asp38–Asp42, Ser87–Leu88, and Glu119. The N6-AMP-lysine intermediate role is filled by Lys121. Residues Arg142, Glu179, Lys296, and Lys320 each contribute to the NAD(+) site. Zn(2+) contacts are provided by Cys414, Cys417, Cys432, and Cys438. The region spanning Val595–Phe677 is the BRCT domain.

Belongs to the NAD-dependent DNA ligase family. LigA subfamily. The cofactor is Mg(2+). Mn(2+) is required as a cofactor.

It catalyses the reaction NAD(+) + (deoxyribonucleotide)n-3'-hydroxyl + 5'-phospho-(deoxyribonucleotide)m = (deoxyribonucleotide)n+m + AMP + beta-nicotinamide D-nucleotide.. DNA ligase that catalyzes the formation of phosphodiester linkages between 5'-phosphoryl and 3'-hydroxyl groups in double-stranded DNA using NAD as a coenzyme and as the energy source for the reaction. It is essential for DNA replication and repair of damaged DNA. The chain is DNA ligase from Coxiella burnetii (strain CbuG_Q212) (Coxiella burnetii (strain Q212)).